Reading from the N-terminus, the 181-residue chain is Protein FAM237A (181 aa).

Positions 1–33 are cleaved as a signal peptide; sequence MADPGNRGGIHRPLSFTCSLLIVGMCCVSPFFC. Residue Leu-113 is modified to Leucine amide. Positions 114 to 181 are cleaved as a propeptide — removed in the mature form; that stretch reads GRRQLVGEEE…GKVNLEIKRK (68 aa).

Post-translationally, the active form requires C-terminal amidation and disulfide bond formation. As to expression, expressed in the pituitary, testis, and heart and at lower levels in the brain.

It localises to the secreted. In terms of biological role, may be capable of activating GPR83 via the GNAQ signaling pathway. This is Protein FAM237A from Homo sapiens (Human).